A 386-amino-acid chain; its full sequence is Alanine racemase (386 aa).

Residue lysine 48 is the Proton acceptor; specific for D-alanine of the active site. Position 48 is an N6-(pyridoxal phosphate)lysine (lysine 48). Residue arginine 149 participates in substrate binding. Residue tyrosine 278 is the Proton acceptor; specific for L-alanine of the active site. Methionine 326 contributes to the substrate binding site.

Belongs to the alanine racemase family. Pyridoxal 5'-phosphate is required as a cofactor.

The enzyme catalyses L-alanine = D-alanine. The protein operates within amino-acid biosynthesis; D-alanine biosynthesis; D-alanine from L-alanine: step 1/1. In terms of biological role, catalyzes the interconversion of L-alanine and D-alanine. May also act on other amino acids. The chain is Alanine racemase (alr) from Nostoc sp. (strain PCC 7120 / SAG 25.82 / UTEX 2576).